The following is a 506-amino-acid chain: Maturase K (506 aa).

It belongs to the intron maturase 2 family. MatK subfamily.

The protein localises to the plastid. The protein resides in the chloroplast. In terms of biological role, usually encoded in the trnK tRNA gene intron. Probably assists in splicing its own and other chloroplast group II introns. The protein is Maturase K of Atractylodes lancea (Atractylodes japonica).